A 149-amino-acid chain; its full sequence is MDQADPREIQTLQMYLNEYGQQIELMTQQLSMIEQQRLEGTAAIETLRALQENADGAVLLPIGGGAYLRVKVLDAGHVLVNIGADVSVERATADAVGYLEDRITELEALAKKVAGSVEQLQGQATEISRRLEAAYRGARQAQAGQGGSS.

The protein belongs to the prefoldin alpha subunit family. In terms of assembly, heterohexamer of two alpha and four beta subunits.

The protein resides in the cytoplasm. In terms of biological role, molecular chaperone capable of stabilizing a range of proteins. Seems to fulfill an ATP-independent, HSP70-like function in archaeal de novo protein folding. This Methanoculleus marisnigri (strain ATCC 35101 / DSM 1498 / JR1) protein is Prefoldin subunit alpha.